The sequence spans 66 residues: MMLDTATEAGKGTLAVTGVGIAVYSPYEIASLCAAVLTALYVGAQLITLLPKMLDSIAELRRRFKK.

Over 1 to 29 the chain is Cytoplasmic; the sequence is MMLDTATEAGKGTLAVTGVGIAVYSPYEI. Residues 30 to 50 form a helical; Signal-anchor for type II membrane protein membrane-spanning segment; that stretch reads ASLCAAVLTALYVGAQLITLL. Residues 51–66 are Periplasmic-facing; the sequence is PKMLDSIAELRRRFKK.

As to quaternary structure, homomultimer.

Its subcellular location is the host cell inner membrane. Accumulates harmlessly in the cytoplasmic membrane until it reaches a critical concentration that triggers the formation of nanometer-scale pores (pinholes) causing host cell membrane depolarization and endolysin refolding and release into the periplasmic space. Once the pinholin has permeabilized the host cell membrane, the SAR-endolysin is released into the periplasm and breaks down the peptidoglycan layer. Determines the precise timing of host cell lysis. Participates with the SAR-endolysin and the U-spanin protein in the sequential events which lead to the programmed host cell lysis releasing the mature viral particles from the host cell. This is Holin from Pseudomonas phage phiKMV.